A 45-amino-acid polypeptide reads, in one-letter code: Large ribosomal subunit protein bL34 (45 aa).

The tract at residues 26–45 (RAGRSILSARRSKGRSQLSA) is disordered.

The protein belongs to the bacterial ribosomal protein bL34 family.

This Parafrankia sp. (strain EAN1pec) protein is Large ribosomal subunit protein bL34.